A 67-amino-acid polypeptide reads, in one-letter code: MAFDKKLLEIVACPVCKGTLILNKDSNGNERLVCRFDRLAYPIEQNIPVLLETEALVLSSEELEKIK.

Belongs to the UPF0434 family.

The polypeptide is UPF0434 protein Patl_1782 (Pseudoalteromonas atlantica (strain T6c / ATCC BAA-1087)).